The sequence spans 331 residues: Isopentenyl-diphosphate delta-isomerase (331 aa).

Substrate is bound at residue 4 to 5 (RK). Residues 59–61 (AMT), serine 89, and asparagine 116 each bind FMN. Glutamine 146 lines the substrate pocket. Glutamate 147 provides a ligand contact to Mg(2+). Residues lysine 178, serine 203, threonine 208, 252–254 (GIR), and 273–274 (SR) each bind FMN.

Belongs to the IPP isomerase type 2 family. As to quaternary structure, homooctamer. Dimer of tetramers. The cofactor is FMN. NADPH is required as a cofactor. Mg(2+) serves as cofactor.

The protein localises to the cytoplasm. It carries out the reaction isopentenyl diphosphate = dimethylallyl diphosphate. Functionally, involved in the biosynthesis of isoprenoids. Catalyzes the 1,3-allylic rearrangement of the homoallylic substrate isopentenyl (IPP) to its allylic isomer, dimethylallyl diphosphate (DMAPP). The sequence is that of Isopentenyl-diphosphate delta-isomerase from Streptococcus mutans serotype c (strain ATCC 700610 / UA159).